The following is a 60-amino-acid chain: UPF0434 protein YcaR (60 aa).

This sequence belongs to the UPF0434 family.

The polypeptide is UPF0434 protein YcaR (Salmonella arizonae (strain ATCC BAA-731 / CDC346-86 / RSK2980)).